The following is a 210-amino-acid chain: N-(5'-phosphoribosyl)anthranilate isomerase (210 aa).

The protein belongs to the TrpF family.

It carries out the reaction N-(5-phospho-beta-D-ribosyl)anthranilate = 1-(2-carboxyphenylamino)-1-deoxy-D-ribulose 5-phosphate. It functions in the pathway amino-acid biosynthesis; L-tryptophan biosynthesis; L-tryptophan from chorismate: step 3/5. This Staphylococcus aureus (strain bovine RF122 / ET3-1) protein is N-(5'-phosphoribosyl)anthranilate isomerase.